Here is a 199-residue protein sequence, read N- to C-terminus: MRFVLDTSIFVNPEIRRKFGDNPTEAMRTFLGYAEMLFGRVEFYMPPGIYREVMHFVDEDELLPEIELYIIKKPPNVHDIKIPAFVVYELIDDIRRRIDKGLRVAEKAVRESVIETDNVDRIIQKLRRNYRKALREGIVDSKEDFELILLAKELDATIVSADVGILTWAQKMGIKWIDAANFREVLEGLVAKMGEGKNL.

Belongs to the HARP family.

It carries out the reaction Endonucleolytic cleavage of RNA, removing 5'-extranucleotides from tRNA precursor.. Functionally, RNA-free RNase P that catalyzes the removal of the 5'-leader sequence from pre-tRNA to produce the mature 5'-terminus. This chain is RNA-free ribonuclease P, found in Thermococcus onnurineus (strain NA1).